A 270-amino-acid chain; its full sequence is 3-methyl-2-oxobutanoate hydroxymethyltransferase (270 aa).

Mg(2+) contacts are provided by D42 and D86. Residues 42–43 (DS), D86, and K116 each bind 3-methyl-2-oxobutanoate. E118 is a Mg(2+) binding site. The active-site Proton acceptor is the E185.

It belongs to the PanB family. As to quaternary structure, homodecamer; pentamer of dimers. Mg(2+) serves as cofactor.

The protein resides in the cytoplasm. It carries out the reaction 3-methyl-2-oxobutanoate + (6R)-5,10-methylene-5,6,7,8-tetrahydrofolate + H2O = 2-dehydropantoate + (6S)-5,6,7,8-tetrahydrofolate. It functions in the pathway cofactor biosynthesis; (R)-pantothenate biosynthesis; (R)-pantoate from 3-methyl-2-oxobutanoate: step 1/2. In terms of biological role, catalyzes the reversible reaction in which hydroxymethyl group from 5,10-methylenetetrahydrofolate is transferred onto alpha-ketoisovalerate to form ketopantoate. This is 3-methyl-2-oxobutanoate hydroxymethyltransferase from Synechococcus sp. (strain CC9902).